Reading from the N-terminus, the 101-residue chain is Small ribosomal subunit protein uS14 (101 aa).

Belongs to the universal ribosomal protein uS14 family. In terms of assembly, part of the 30S ribosomal subunit. Contacts proteins S3 and S10.

Functionally, binds 16S rRNA, required for the assembly of 30S particles and may also be responsible for determining the conformation of the 16S rRNA at the A site. This is Small ribosomal subunit protein uS14 from Burkholderia vietnamiensis (strain G4 / LMG 22486) (Burkholderia cepacia (strain R1808)).